The sequence spans 412 residues: Early growth response protein 2b (412 aa).

The interval 269–299 is disordered; it reads YTPQNLPLRPILRPRKYPNRPSKTPVHERPY. 3 C2H2-type zinc fingers span residues 299–323, 329–351, and 357–379; these read YPCP…IRIH, FQCR…IRTH, and FACD…TKIH. Residues 371-412 are disordered; sequence ERKRHTKIHLRQKERKSSSSSTGVSSSERGVATSICSSSSNQ. Basic residues predominate over residues 374-384; the sequence is RHTKIHLRQKE. A compositionally biased stretch (low complexity) spans 388–401; that stretch reads SSSSTGVSSSERGV.

Belongs to the EGR C2H2-type zinc-finger protein family.

Its subcellular location is the nucleus. Its function is as follows. Sequence-specific DNA-binding transcription factor. Binds to two specific DNA sites located in the promoter region of HOXA4. This Danio rerio (Zebrafish) protein is Early growth response protein 2b (egr2b).